The following is a 150-amino-acid chain: Arginine repressor (150 aa).

The protein belongs to the ArgR family.

The protein localises to the cytoplasm. The protein operates within amino-acid biosynthesis; L-arginine biosynthesis [regulation]. Functionally, regulates arginine biosynthesis genes. The protein is Arginine repressor of Clostridium botulinum (strain Alaska E43 / Type E3).